The sequence spans 861 residues: E3 ubiquitin-protein ligase HECTD3 (861 aa).

An N-acetylalanine modification is found at Ala2. Ser12 is modified (phosphoserine). The region spanning 219 to 397 (DEDLIHFLYD…ASLVRYPRLE (179 aa)) is the DOC domain. One can recognise an HECT domain in the interval 512 to 857 (YEKPLDYRWP…NCVAIDTDMS (346 aa)). Catalysis depends on Cys823, which acts as the Glycyl thioester intermediate.

As to quaternary structure, interacts with TRIOBP. Interacts with STX8.

The protein resides in the cytoplasm. It localises to the perinuclear region. It carries out the reaction S-ubiquitinyl-[E2 ubiquitin-conjugating enzyme]-L-cysteine + [acceptor protein]-L-lysine = [E2 ubiquitin-conjugating enzyme]-L-cysteine + N(6)-ubiquitinyl-[acceptor protein]-L-lysine.. It functions in the pathway protein modification; protein ubiquitination. E3 ubiquitin ligases accepts ubiquitin from an E2 ubiquitin-conjugating enzyme in the form of a thioester and then directly transfers the ubiquitin to targeted substrates. Mediates ubiquitination of TRIOBP and its subsequent proteasomal degradation, thus facilitating cell cycle progression by regulating the turn-over of TRIOBP. Also mediates ubiquitination of STX8. The polypeptide is E3 ubiquitin-protein ligase HECTD3 (Hectd3) (Mus musculus (Mouse)).